We begin with the raw amino-acid sequence, 218 residues long: Large ribosomal subunit protein uL3 (218 aa).

The protein belongs to the universal ribosomal protein uL3 family. In terms of assembly, part of the 50S ribosomal subunit. Forms a cluster with proteins L14 and L19.

Its function is as follows. One of the primary rRNA binding proteins, it binds directly near the 3'-end of the 23S rRNA, where it nucleates assembly of the 50S subunit. The polypeptide is Large ribosomal subunit protein uL3 (Corynebacterium jeikeium (strain K411)).